The primary structure comprises 73 residues: Large ribosomal subunit protein uL29 (73 aa).

Belongs to the universal ribosomal protein uL29 family.

This is Large ribosomal subunit protein uL29 from Synechococcus sp. (strain JA-2-3B'a(2-13)) (Cyanobacteria bacterium Yellowstone B-Prime).